Reading from the N-terminus, the 914-residue chain is DNA mismatch repair protein MutS (914 aa).

Residues 28–74 (NTNSVKDSNLNDEELSKNAELRPRKRKKSVLLQNSVGEQTEDFSNDE) are disordered. Residue 726–733 (GPNASGKS) coordinates ATP.

The protein belongs to the DNA mismatch repair MutS family.

This protein is involved in the repair of mismatches in DNA. It is possible that it carries out the mismatch recognition step. This protein has a weak ATPase activity. The sequence is that of DNA mismatch repair protein MutS from Prochlorococcus marinus (strain SARG / CCMP1375 / SS120).